The sequence spans 211 residues: Ribosomal RNA small subunit methyltransferase G (211 aa).

Residues G73, 126–127 (IE), and R142 each bind S-adenosyl-L-methionine.

It belongs to the methyltransferase superfamily. RNA methyltransferase RsmG family.

It is found in the cytoplasm. It carries out the reaction guanosine(527) in 16S rRNA + S-adenosyl-L-methionine = N(7)-methylguanosine(527) in 16S rRNA + S-adenosyl-L-homocysteine. Its function is as follows. Specifically methylates the N7 position of guanine in position 527 of 16S rRNA. This Methylorubrum extorquens (strain PA1) (Methylobacterium extorquens) protein is Ribosomal RNA small subunit methyltransferase G.